Consider the following 597-residue polypeptide: Protein IQ-DOMAIN 29 (597 aa).

Positions 1-31 (MGKTPSPGKWIKSLLGKKSSKSSLEKGGEKL) are disordered. IQ domains are found at residues 106 to 134 (LEEA…GITR), 135 to 153 (VQAV…ATYS), and 157 to 183 (GIVK…QKTN). The segment at 159 to 173 (VKVQALVRGKKARSS) is calmodulin-binding. Positions 264–271 (KKRSFQAV) match the Nuclear localization signal 1 motif. Disordered regions lie at residues 268-379 (FQAV…KKEI) and 407-597 (LIPV…EWKR). The segment covering 289–300 (STTANSSTSRST) has biased composition (low complexity). Over residues 319–329 (ELSKIENDKSK) the composition is skewed to basic and acidic residues. The Nuclear localization signal 2 motif lies at 356-363 (HKKASLSN). Residues 414–463 (KESDLDKDEKSLVLDKPEQDELRTAERDDKAEEELKTAERDDSAEEKIQE) are compositionally biased toward basic and acidic residues. The span at 467 to 480 (QISSENGNVASENT) shows a compositional bias: polar residues. Basic and acidic residues predominate over residues 481–500 (KPSDRRASLPAKIENHHQDD). A compositionally biased stretch (polar residues) spans 572–584 (GSMNSDRSFSSSK). The segment covering 585–597 (DIGDKSTKAEWKR) has biased composition (basic and acidic residues).

The protein belongs to the IQD family. In terms of assembly, binds to multiple calmodulin (CaM) in the presence of Ca(2+) and CaM-like proteins.

The protein localises to the nucleus. It is found in the nucleus envelope. The protein resides in the cytoplasm. It localises to the cytoskeleton. Its subcellular location is the cell membrane. Functionally, may be involved in cooperative interactions with calmodulins or calmodulin-like proteins. Recruits calmodulin proteins to microtubules, thus being a potential scaffold in cellular signaling and trafficking. May associate with nucleic acids and regulate gene expression at the transcriptional or post-transcriptional level. This Arabidopsis thaliana (Mouse-ear cress) protein is Protein IQ-DOMAIN 29.